Here is a 192-residue protein sequence, read N- to C-terminus: MGKGCKVVVCGLLSVGKTAILEQLLYGNHTIGMEDCETMEDVYMASVETDRGVKEQLHLYDTRGLQEGVELPKHYFSFADGFVLVYSVNNLESFQRVELLKKEIDKFKDKKEVAIVVLGNKIDLSEQRQVDAEVAQQWAKSEKVRLWEVTVTDRKTLIEPFTLLASKLSQPQSKSSFPLPGRKNKGNSSSEN.

11-18 (GLLSVGKT) serves as a coordination point for GTP. An Effector region motif is present at residues 35-43 (DCETMEDVY). The interactions with NFKBIA and NFKBIB stretch occupies residues 58-93 (HLYDTRGLQEGVELPKHYFSFADGFVLVYSVNNLES). Residues 61 to 65 (DTRGL) and 120 to 123 (NKID) contribute to the GTP site. The disordered stretch occupies residues 168–192 (LSQPQSKSSFPLPGRKNKGNSSSEN).

This sequence belongs to the small GTPase superfamily. Ras family. KappaB-Ras subfamily. Interacts with both NF-kappa-B inhibitor alpha (NFKBIA) and beta (NFKBIB) in vitro. However, it probably only interacts with NFKBIB in vivo. Forms a complex with NFKBIB and NF-kappa-B heterodimer (p50/NFKB1 and p65/RELA). Also interacts with c-Rel (REL).

The protein localises to the cytoplasm. Atypical Ras-like protein that acts as a potent regulator of NF-kappa-B activity by preventing the degradation of NF-kappa-B inhibitor beta (NFKBIB) by most signals, explaining why NFKBIB is more resistant to degradation. May act by blocking phosphorylation of NFKBIB and mediating cytoplasmic retention of p65/RELA NF-kappa-B subunit. It is unclear whether it acts as a GTPase. Both GTP- and GDP-bound forms block phosphorylation of NFKBIB. This is NF-kappa-B inhibitor-interacting Ras-like protein 1 (NKIRAS1) from Macaca fascicularis (Crab-eating macaque).